A 190-amino-acid polypeptide reads, in one-letter code: RING finger protein 227 (190 aa).

The RING-type zinc finger occupies 18 to 81; that stretch reads CNICYRPFNL…RRVVTCPFCR (64 aa). The interval 111–145 is disordered; sequence KCERDEAGNPAKESSDADGEAEEEGESEKGAGPRS. The segment covering 126-136 has biased composition (acidic residues); that stretch reads DADGEAEEEGE.

The sequence is that of RING finger protein 227 from Homo sapiens (Human).